The sequence spans 519 residues: Mannosyl-oligosaccharide alpha-1,2-mannosidase (519 aa).

A signal peptide spans 1–22 (MKGSPVLAVCAAALTLIPSVVA). Asn-187 carries an N-linked (GlcNAc...) asparagine glycan. Cys-337 and Cys-366 form a disulfide bridge. Glu-380 acts as the Proton donor in catalysis. A glycan (N-linked (GlcNAc...) asparagine) is linked at Asn-443. A Ca(2+)-binding site is contributed by Thr-507.

The protein belongs to the glycosyl hydrolase 47 family. In terms of assembly, monomer. Requires Ca(2+) as cofactor. The cofactor is Mg(2+).

The protein resides in the secreted. It catalyses the reaction N(4)-(alpha-D-Man-(1-&gt;2)-alpha-D-Man-(1-&gt;2)-alpha-D-Man-(1-&gt;3)-[alpha-D-Man-(1-&gt;2)-alpha-D-Man-(1-&gt;3)-[alpha-D-Man-(1-&gt;2)-alpha-D-Man-(1-&gt;6)]-alpha-D-Man-(1-&gt;6)]-beta-D-Man-(1-&gt;4)-beta-D-GlcNAc-(1-&gt;4)-beta-D-GlcNAc)-L-asparaginyl-[protein] (N-glucan mannose isomer 9A1,2,3B1,2,3) + 4 H2O = N(4)-(alpha-D-Man-(1-&gt;3)-[alpha-D-Man-(1-&gt;3)-[alpha-D-Man-(1-&gt;6)]-alpha-D-Man-(1-&gt;6)]-beta-D-Man-(1-&gt;4)-beta-D-GlcNAc-(1-&gt;4)-beta-D-GlcNAc)-L-asparaginyl-[protein] (N-glucan mannose isomer 5A1,2) + 4 beta-D-mannose. The catalysed reaction is N(4)-(alpha-D-Man-(1-&gt;2)-alpha-D-Man-(1-&gt;2)-alpha-D-Man-(1-&gt;3)-[alpha-D-Man-(1-&gt;3)-[alpha-D-Man-(1-&gt;2)-alpha-D-Man-(1-&gt;6)]-alpha-D-Man-(1-&gt;6)]-beta-D-Man-(1-&gt;4)-beta-D-GlcNAc-(1-&gt;4)-beta-D-GlcNAc)-L-asparaginyl-[protein] (N-glucan mannose isomer 8A1,2,3B1,3) + 3 H2O = N(4)-(alpha-D-Man-(1-&gt;3)-[alpha-D-Man-(1-&gt;3)-[alpha-D-Man-(1-&gt;6)]-alpha-D-Man-(1-&gt;6)]-beta-D-Man-(1-&gt;4)-beta-D-GlcNAc-(1-&gt;4)-beta-D-GlcNAc)-L-asparaginyl-[protein] (N-glucan mannose isomer 5A1,2) + 3 beta-D-mannose. It functions in the pathway protein modification; protein glycosylation. Alpha-mannosidase involved in the maturation of Asn-linked oligosaccharides. Progressively trims alpha-1,2-linked mannose residues from Man(9)GlcNAc(2) to produce Man(5)GlcNAc(2). This chain is Mannosyl-oligosaccharide alpha-1,2-mannosidase, found in Coccidioides posadasii (strain RMSCC 757 / Silveira) (Valley fever fungus).